We begin with the raw amino-acid sequence, 968 residues long: RNA polymerase-associated protein RapA (968 aa).

Residues 163-332 (EVGRRYAPRV…FARLRLLDPD (170 aa)) form the Helicase ATP-binding domain. 176 to 183 (DEVGLGKT) is an ATP binding site. Positions 278-281 (DEAH) match the DEAH box motif. One can recognise a Helicase C-terminal domain in the interval 491–641 (RVDWLIEFLK…AFELTCPSGH (151 aa)).

This sequence belongs to the SNF2/RAD54 helicase family. RapA subfamily. In terms of assembly, interacts with the RNAP. Has a higher affinity for the core RNAP than for the holoenzyme. Its ATPase activity is stimulated by binding to RNAP.

Transcription regulator that activates transcription by stimulating RNA polymerase (RNAP) recycling in case of stress conditions such as supercoiled DNA or high salt concentrations. Probably acts by releasing the RNAP, when it is trapped or immobilized on tightly supercoiled DNA. Does not activate transcription on linear DNA. Probably not involved in DNA repair. In Shewanella baltica (strain OS185), this protein is RNA polymerase-associated protein RapA.